Reading from the N-terminus, the 107-residue chain is MREVVIASAARTAVGSFGGAFKSVSAVELGVTAAKEAIKRANITPDMIDESLLGGVLTAGLGQNIARQIALGAGIPVEKPAMTINIVCGSGLRSWRALRTRTGPRRR.

The active-site Acyl-thioester intermediate is the C88.

It belongs to the thiolase-like superfamily. Thiolase family. In terms of assembly, homotetramer.

The protein resides in the cytoplasm. It carries out the reaction 2 acetyl-CoA = acetoacetyl-CoA + CoA. Catalyzes the condensation of two molecules of acetyl-CoA to produce acetoacetyl-CoA. The polypeptide is Acetyl-CoA acetyltransferase (thi) (Clostridioides difficile (Peptoclostridium difficile)).